The following is a 27-amino-acid chain: Alpha-benincasin (27 aa).

Its function is as follows. Has weak antifungal activity toward C.comatus and P.piricola but not toward M.arachidicola. Inhibits cell-free translation in rabbit reticulocyte lysate system. This is Alpha-benincasin from Benincasa hispida (Wax gourd).